Consider the following 75-residue polypeptide: UPF0291 protein Teth39_0326 (75 aa).

It belongs to the UPF0291 family.

Its subcellular location is the cytoplasm. This chain is UPF0291 protein Teth39_0326, found in Thermoanaerobacter pseudethanolicus (strain ATCC 33223 / 39E) (Clostridium thermohydrosulfuricum).